The following is a 315-amino-acid chain: Glycine--tRNA ligase alpha subunit (315 aa).

It belongs to the class-II aminoacyl-tRNA synthetase family. Tetramer of two alpha and two beta subunits.

Its subcellular location is the cytoplasm. It carries out the reaction tRNA(Gly) + glycine + ATP = glycyl-tRNA(Gly) + AMP + diphosphate. The sequence is that of Glycine--tRNA ligase alpha subunit from Pseudomonas putida (strain ATCC 47054 / DSM 6125 / CFBP 8728 / NCIMB 11950 / KT2440).